The sequence spans 145 residues: uncharacterized protein (145 aa).

The first 20 residues, 1–20 (MKTCTVICCTALVLGLTAYA), serve as a signal peptide directing secretion.

This is an uncharacterized protein from Aedes vexans (Inland floodwater mosquito).